The following is a 559-amino-acid chain: Probable alpha-(1-&gt;6)-mannopyranosyltransferase MSMEG_3120/MSMEI_3041 (559 aa).

12 helical membrane-spanning segments follow: residues 41–61, 81–101, 202–222, 247–267, 300–316, 321–340, 355–375, 386–406, 419–439, 455–475, 480–500, and 507–527; these read FGAT…ARPV, VSLT…LMLG, IVEA…LIVW, LLFM…GLML, WQPM…IAMS, LPSL…RWGG, ISLA…GWLF, WMSP…LLGL, AIGV…VLRG, VLLF…PLAA, PGFR…GPTA, and LFQI…LIAL. A compositionally biased stretch (pro residues) spans 535-548; that stretch reads RPAPEPPARPPEQP. Residues 535–559 form a disordered region; sequence RPAPEPPARPPEQPAPADDAYAESP.

It belongs to the MptA/B family.

It is found in the membrane. In terms of biological role, catalyzes the addition of alpha-(1-&gt;6)-mannose residue. In Mycolicibacterium smegmatis (strain ATCC 700084 / mc(2)155) (Mycobacterium smegmatis), this protein is Probable alpha-(1-&gt;6)-mannopyranosyltransferase MSMEG_3120/MSMEI_3041.